The primary structure comprises 152 residues: Transcriptional regulator MraZ (152 aa).

2 SpoVT-AbrB domains span residues 5–52 and 81–124; these read ANAI…PLNE and ATES…DEDM.

The protein belongs to the MraZ family. Forms oligomers.

The protein resides in the cytoplasm. It is found in the nucleoid. This Psychromonas ingrahamii (strain DSM 17664 / CCUG 51855 / 37) protein is Transcriptional regulator MraZ.